The chain runs to 186 residues: MGGTFDPIHHGHLVVASEVASRFCLDEVIFVPTGRPPHKKEVSDPWHRYLMAVIATASNQRFSVSKIDIERTGPTFTVDTLRELREQLQSSDLFFITGTDALARIFSWKDADTLWSLAHFVAVSRPGHEVVDIPNDRISFLEVPAMAISSSNCRERVRSGLPIWYLVPEGVVQYIAKHGLYRSLYG.

The protein belongs to the NadD family.

It carries out the reaction nicotinate beta-D-ribonucleotide + ATP + H(+) = deamido-NAD(+) + diphosphate. It functions in the pathway cofactor biosynthesis; NAD(+) biosynthesis; deamido-NAD(+) from nicotinate D-ribonucleotide: step 1/1. Functionally, catalyzes the reversible adenylation of nicotinate mononucleotide (NaMN) to nicotinic acid adenine dinucleotide (NaAD). This is Probable nicotinate-nucleotide adenylyltransferase from Tropheryma whipplei (strain TW08/27) (Whipple's bacillus).